An 825-amino-acid chain; its full sequence is Heterogeneous nuclear ribonucleoprotein U (825 aa).

Residue serine 2 is modified to N-acetylserine; partial. A Phosphoserine modification is found at serine 4. Positions valine 8–leucine 42 constitute an SAP domain. N6-acetyllysine is present on residues lysine 17 and lysine 21. The interval alanine 41 to glutamate 281 is disordered. Position 59 is a phosphoserine; by PLK1 (serine 59). A Phosphoserine modification is found at serine 66. Residues alanine 72 to glycine 81 are compositionally biased toward low complexity. Composition is skewed to acidic residues over residues glycine 82–glycine 95, proline 120–aspartate 134, and glutamate 140–glycine 153. Over residues glycine 159–glycine 178 the composition is skewed to low complexity. Lysine 186 is modified (N6-acetyllysine). Serine 187 is modified (ADP-ribosylserine). Positions alanine 199–glycine 211 are enriched in low complexity. An N6-acetyllysine modification is found at lysine 215. Residues glycine 233–tyrosine 266 show a composition bias toward basic and acidic residues. Arginine 255 is modified (citrulline). At lysine 265 the chain carries N6-acetyllysine; alternate. A Glycyl lysine isopeptide (Lys-Gly) (interchain with G-Cter in SUMO1); alternate cross-link involves residue lysine 265. Lysine 265 is covalently cross-linked (Glycyl lysine isopeptide (Lys-Gly) (interchain with G-Cter in SUMO2); alternate). Position 266 is a phosphotyrosine (tyrosine 266). Serine 267 and serine 271 each carry phosphoserine. Residues serine 267 to lysine 464 form the B30.2/SPRY domain. A Phosphothreonine modification is found at threonine 286. Residue lysine 352 is modified to N6-acetyllysine. The ATPase domain stretch occupies residues proline 488–glutamate 672. A Glycyl lysine isopeptide (Lys-Gly) (interchain with G-Cter in SUMO2) cross-link involves residue lysine 495. An ATP-binding site is contributed by glycine 504–threonine 511. An N6-acetyllysine; alternate mark is found at lysine 516 and lysine 524. Glycyl lysine isopeptide (Lys-Gly) (interchain with G-Cter in SUMO2); alternate cross-links involve residues lysine 516 and lysine 524. Threonine 532 bears the Phosphothreonine mark. A Glycyl lysine isopeptide (Lys-Gly) (interchain with G-Cter in SUMO2) cross-link involves residue lysine 536. N6-acetyllysine is present on lysine 551. Lysine 565 bears the N6-acetyllysine; alternate mark. Lysine 565 is covalently cross-linked (Glycyl lysine isopeptide (Lys-Gly) (interchain with G-Cter in SUMO2); alternate). Lysine 574 is covalently cross-linked (Glycyl lysine isopeptide (Lys-Gly) (interchain with G-Cter in SUMO2)). The residue at position 582 (threonine 582) is a Phosphothreonine. Residues lysine 609 and lysine 626 each participate in a glycyl lysine isopeptide (Lys-Gly) (interchain with G-Cter in SUMO2) cross-link. An actin-binding region spans residues glutamate 611–lysine 626. Lysine 635 bears the N6-acetyllysine; alternate mark. A Glycyl lysine isopeptide (Lys-Gly) (interchain with G-Cter in SUMO2); alternate cross-link involves residue lysine 635. Residues lysine 664 and lysine 670 each participate in a glycyl lysine isopeptide (Lys-Gly) (interchain with G-Cter in SUMO2) cross-link. A compositionally biased stretch (basic and acidic residues) spans glutamate 671 to glutamine 683. A disordered region spans residues glutamate 671–isoleucine 749. Arginine 702 carries the omega-N-methylarginine modification. Residues glycine 710–glycine 728 show a composition bias toward gly residues. Residues methionine 714–arginine 739 are RNA-binding RGG-box. 3 positions are modified to asymmetric dimethylarginine: arginine 715, arginine 720, and arginine 727. Asymmetric dimethylarginine; alternate occurs at positions 733 and 739. Arginine 733 and arginine 739 each carry omega-N-methylarginine; alternate. Arginine 739 carries the dimethylated arginine; in A2780 ovarian carcinoma cell line modification. Over residues arginine 739–isoleucine 749 the composition is skewed to gly residues. Residues arginine 755 and arginine 762 each carry the asymmetric dimethylarginine modification. Residues glycine 769–serine 799 are disordered. The span at asparagine 778 to serine 799 shows a compositional bias: low complexity. An N6-acetyllysine; alternate modification is found at lysine 814. Lysine 814 participates in a covalent cross-link: Glycyl lysine isopeptide (Lys-Gly) (interchain with G-Cter in SUMO2); alternate.

As to quaternary structure, oligomer (via ATPase domain and RNA-binding RGG-box region); oligomerization occurs upon ATP-binding in a chromatin-associated RNAs (caRNAs)- and transcription-dependent manner and is required for chromatin decompaction. ATP hydrolysis is required to cycle from an oligomeric to monomeric state to compact chromatin. Component of the coding region determinant (CRD)-mediated complex, composed of DHX9, HNRNPU, IGF2BP1, SYNCRIP and YBX1. Identified in the spliceosome C complex. Identified in a IGF2BP1-dependent mRNP granule complex containing untranslated mRNAs. Associates with heterogeneous nuclear ribonucleoprotein (hnRNP) particles. Associates (via middle region) with the C-terminal domain (CTD) RNA polymerase II (Pol II) holoenzyme; this association occurs in a RNA-independent manner. Associates (via middle region) with the core-TFIIH basal transcription factor complex; this association inhibits the CTD phosphorylation of RNA polymerase II holoenzyme by down-regulating TFIIH kinase activity. Associates with the telomerase holoenzyme complex. Associates with spindle microtubules (MTs) in a TPX2-dependent manner. Interacts (via C-terminus) with actin; this interaction is direct and mediates association with the phosphorylated CTD of RNA polymerase II and is disrupted in presence of the long non-coding H19 RNA. Interacts with AURKA. Interacts (via C-terminus) with CBX5; this interaction is, at least in part, RNA-dependent. Interacts with CR2. Interacts with CRY1. Interacts (via C-terminus) with EP300; this interaction enhances DNA-binding to nuclear scaffold/matrix attachment region (S/MAR) elements. Interacts with ERBB4. Interacts with GEMIN5. Interacts with IGF2BP1. Interacts with IGF2BP2 and IGF2BP3. Interacts with NCL; this interaction occurs during mitosis. Interacts (via C-terminus) with NR3C1 (via C-terminus). Interacts with PLK1; this interaction induces phosphorylation of HNRNPU at Ser-59 in mitosis. Interacts with POU3F4. Interacts with SMARCA4; this interaction occurs in embryonic stem cells and stimulates global Pol II-mediated transcription. Interacts (via C-terminus) with TOP2A; this interaction protects the topoisomerase TOP2A from degradation and positively regulates the relaxation of supercoiled DNA by TOP2A in a RNA-dependent manner. Interacts with TPX2; this interaction recruits HNRNPU to spindle microtubules (MTs). Interacts with UBQLN2. Interacts (via RNA-binding RGG-box region) with ZBTB7B; the interaction facilitates the recruitment of long non-coding RNA Blnc1 by ZBTB7B. Interacts with ERCC6. In terms of assembly, (Microbial infection) Interacts with HIV-1 protein Rev. In terms of processing, cleaved at Asp-100 by CASP3 during T-cell apoptosis, resulting in a loss of DNA- and chromatin-binding activities. Extensively phosphorylated. Phosphorylated on Ser-59 by PLK1 and dephosphorylated by protein phosphatase 2A (PP2A) in mitosis. Post-translationally, arg-739 is dimethylated, probably to asymmetric dimethylarginine. Arg-733 is dimethylated, probably to asymmetric dimethylarginine. In terms of processing, citrullinated by PADI4. In terms of tissue distribution, widely expressed.

The protein resides in the nucleus. Its subcellular location is the nucleus matrix. The protein localises to the chromosome. It localises to the nucleus speckle. It is found in the cytoplasm. The protein resides in the cytoskeleton. Its subcellular location is the microtubule organizing center. The protein localises to the centrosome. It localises to the centromere. It is found in the kinetochore. The protein resides in the spindle. Its subcellular location is the spindle pole. The protein localises to the midbody. It localises to the cell surface. It is found in the cytoplasmic granule. Its function is as follows. DNA- and RNA-binding protein involved in several cellular processes such as nuclear chromatin organization, telomere-length regulation, transcription, mRNA alternative splicing and stability, Xist-mediated transcriptional silencing and mitotic cell progression. Plays a role in the regulation of interphase large-scale gene-rich chromatin organization through chromatin-associated RNAs (caRNAs) in a transcription-dependent manner, and thereby maintains genomic stability. Required for the localization of the long non-coding Xist RNA on the inactive chromosome X (Xi) and the subsequent initiation and maintenance of X-linked transcriptional gene silencing during X-inactivation. Plays a role as a RNA polymerase II (Pol II) holoenzyme transcription regulator. Promotes transcription initiation by direct association with the core-TFIIH basal transcription factor complex for the assembly of a functional pre-initiation complex with Pol II in a actin-dependent manner. Blocks Pol II transcription elongation activity by inhibiting the C-terminal domain (CTD) phosphorylation of Pol II and dissociates from Pol II pre-initiation complex prior to productive transcription elongation. Positively regulates CBX5-induced transcriptional gene silencing and retention of CBX5 in the nucleus. Negatively regulates glucocorticoid-mediated transcriptional activation. Key regulator of transcription initiation and elongation in embryonic stem cells upon leukemia inhibitory factor (LIF) signaling. Involved in the long non-coding RNA H19-mediated Pol II transcriptional repression. Participates in the circadian regulation of the core clock component BMAL1 transcription. Plays a role in the regulation of telomere length. Plays a role as a global pre-mRNA alternative splicing modulator by regulating U2 small nuclear ribonucleoprotein (snRNP) biogenesis. Plays a role in mRNA stability. Component of the CRD-mediated complex that promotes MYC mRNA stabilization. Enhances the expression of specific genes, such as tumor necrosis factor TNFA, by regulating mRNA stability, possibly through binding to the 3'-untranslated region (UTR). Plays a role in mitotic cell cycle regulation. Involved in the formation of stable mitotic spindle microtubules (MTs) attachment to kinetochore, spindle organization and chromosome congression. Phosphorylation at Ser-59 by PLK1 is required for chromosome alignement and segregation and progression through mitosis. Also contributes to the targeting of AURKA to mitotic spindle MTs. Binds to double- and single-stranded DNA and RNA, poly(A), poly(C) and poly(G) oligoribonucleotides. Binds to chromatin-associated RNAs (caRNAs). Associates with chromatin to scaffold/matrix attachment region (S/MAR) elements in a chromatin-associated RNAs (caRNAs)-dependent manner. Binds to the Xist RNA. Binds the long non-coding H19 RNA. Binds to SMN1/2 pre-mRNAs at G/U-rich regions. Binds to small nuclear RNAs (snRNAs). Binds to the 3'-UTR of TNFA mRNA. Binds (via RNA-binding RGG-box region) to the long non-coding Xist RNA; this binding is direct and bridges the Xist RNA and the inactive chromosome X (Xi). Also negatively regulates embryonic stem cell differentiation upon LIF signaling. Required for embryonic development. Binds to brown fat long non-coding RNA 1 (Blnc1); facilitates the recruitment of Blnc1 by ZBTB7B required to drive brown and beige fat development and thermogenesis. Functionally, (Microbial infection) Negatively regulates immunodeficiency virus type 1 (HIV-1) replication by preventing the accumulation of viral mRNA transcripts in the cytoplasm. The polypeptide is Heterogeneous nuclear ribonucleoprotein U (Homo sapiens (Human)).